Here is a 365-residue protein sequence, read N- to C-terminus: Coxsackievirus and adenovirus receptor homolog (365 aa).

The first 19 residues, 1–19 (MELLLRFLLLCGVADFTRG), serve as a signal peptide directing secretion. 2 Ig-like C2-type domains span residues 20 to 136 (LSIT…IQLT) and 141 to 228 (PSGI…LRLD). Topologically, residues 20-238 (LSITTPEQMI…VVPPSNRAGT (219 aa)) are extracellular. Cystine bridges form between C41/C120, C146/C223, and C162/C212. N-linked (GlcNAc...) asparagine glycosylation occurs at N106. A helical membrane pass occupies residues 239-259 (IAGAVIGTLLALVLIALIVFC). S-palmitoyl cysteine attachment occurs at residues C259 and C260. Residues 260–365 (CHKKRREEKY…PAQSKDGSIV (106 aa)) lie on the Cytoplasmic side of the membrane. A compositionally biased stretch (basic and acidic residues) spans 269-282 (YEKEVHHDIREDVP). The interval 269–343 (YEKEVHHDIR…TLPPAKVAAP (75 aa)) is disordered. Over residues 286-322 (SRTSTARSYIGSNHSSLGSMSPSNMEGYSKTQYNQVP) the composition is skewed to polar residues. 6 positions are modified to phosphoserine: S297, S304, S306, S323, S332, and S363. The short motif at 360–365 (KDGSIV) is the PDZ-binding element.

Monomer. May form homodimers. Interacts with LNX, MAGI1, DLG4, PRKCABP, TJP1 and CTNNB1. Interacts with MPDZ; recruits MPDZ to intercellular contact sites. Interacts with JAML (homodimeric form). N-glycosylated. Post-translationally, palmitoylated on Cys-259 and/or Cys-260; required for proper localization to the plasma membrane.

The protein resides in the cell membrane. The protein localises to the basolateral cell membrane. It is found in the cell junction. Its subcellular location is the tight junction. It localises to the adherens junction. In terms of biological role, component of the epithelial apical junction complex that may function as a homophilic cell adhesion molecule and is essential for tight junction integrity. Also involved in transepithelial migration of leukocytes through adhesive interactions with JAML a transmembrane protein of the plasma membrane of leukocytes. The interaction between both receptors also mediates the activation of gamma-delta T-cells, a subpopulation of T-cells residing in epithelia and involved in tissue homeostasis and repair. Upon epithelial CXADR-binding, JAML induces downstream cell signaling events in gamma-delta T-cells through PI3-kinase and MAP kinases. It results in proliferation and production of cytokines and growth factors by T-cells that in turn stimulate epithelial tissues repair. In Bos taurus (Bovine), this protein is Coxsackievirus and adenovirus receptor homolog (CXADR).